The chain runs to 194 residues: Methylthioribulose-1-phosphate dehydratase (194 aa).

Zn(2+) is bound by residues His84 and His86.

The protein belongs to the aldolase class II family. MtnB subfamily. Zn(2+) is required as a cofactor.

The enzyme catalyses 5-(methylsulfanyl)-D-ribulose 1-phosphate = 5-methylsulfanyl-2,3-dioxopentyl phosphate + H2O. It participates in amino-acid biosynthesis; L-methionine biosynthesis via salvage pathway; L-methionine from S-methyl-5-thio-alpha-D-ribose 1-phosphate: step 2/6. In terms of biological role, catalyzes the dehydration of methylthioribulose-1-phosphate (MTRu-1-P) into 2,3-diketo-5-methylthiopentyl-1-phosphate (DK-MTP-1-P). This chain is Methylthioribulose-1-phosphate dehydratase, found in Cronobacter sakazakii (Enterobacter sakazakii).